The following is a 174-amino-acid chain: Small ribosomal subunit protein bS16 (174 aa).

Residues 81 to 174 (QRFTGEPAPP…DATTDATPSA (94 aa)) form a disordered region. Residues 87–97 (PAPPPMKTAPP) are compositionally biased toward pro residues. Over residues 98-118 (KPDKKALFEAAAKEAAGEPRA) the composition is skewed to basic and acidic residues. Residues 135–158 (ETTPAAEAAPDAAASADEPAGGAS) are compositionally biased toward low complexity. Residues 160 to 174 (AAESQDATTDATPSA) show a composition bias toward polar residues.

This sequence belongs to the bacterial ribosomal protein bS16 family.

This chain is Small ribosomal subunit protein bS16, found in Acidothermus cellulolyticus (strain ATCC 43068 / DSM 8971 / 11B).